The following is a 247-amino-acid chain: uncharacterized protein (247 aa).

The disordered stretch occupies residues 225–247; the sequence is LASAPVPPSGSGNSGHRRANLGL.

This is an uncharacterized protein from Methanocaldococcus jannaschii (strain ATCC 43067 / DSM 2661 / JAL-1 / JCM 10045 / NBRC 100440) (Methanococcus jannaschii).